The primary structure comprises 397 residues: Elongation factor Tu (397 aa).

The tr-type G domain occupies 10-207; it reads LPHVNVGTIG…TLDSYIPEPE (198 aa). Residues 19-26 are G1; it reads GHVDHGKT. 19 to 26 serves as a coordination point for GTP; sequence GHVDHGKT. Threonine 26 serves as a coordination point for Mg(2+). The segment at 60-64 is G2; the sequence is GITIN. Positions 81–84 are G3; that stretch reads DCPG. Residues 81–85 and 136–139 each bind GTP; these read DCPGH and NKAD. The interval 136 to 139 is G4; that stretch reads NKAD. Residues 174–176 are G5; that stretch reads SAR.

This sequence belongs to the TRAFAC class translation factor GTPase superfamily. Classic translation factor GTPase family. EF-Tu/EF-1A subfamily. Monomer.

The protein resides in the cytoplasm. It carries out the reaction GTP + H2O = GDP + phosphate + H(+). Functionally, GTP hydrolase that promotes the GTP-dependent binding of aminoacyl-tRNA to the A-site of ribosomes during protein biosynthesis. This Pseudomonas fluorescens (strain Pf0-1) protein is Elongation factor Tu.